Reading from the N-terminus, the 556-residue chain is Protein trichome birefringence-like 1 (556 aa).

The chain crosses the membrane as a helical; Signal-anchor for type II membrane protein span at residues 38 to 58 (TFVYAFVVTFVALTVFLAFSP). The GDS motif signature appears at 269–271 (GDS). The DCXHWCLPGXXDXWN motif signature appears at 514–528 (DCSHWCLPGVPDSWN).

This sequence belongs to the PC-esterase family. TBL subfamily. Not expressed in trichomes.

It localises to the membrane. Functionally, can complement TBR and is therefore functionally equivalent, but may work in different tissue. May act as a bridging protein that binds pectin and other cell wall polysaccharides. Probably involved in maintaining esterification of pectins. May be involved in the specific O-acetylation of cell wall polymers. This is Protein trichome birefringence-like 1 (TBL1) from Arabidopsis thaliana (Mouse-ear cress).